We begin with the raw amino-acid sequence, 303 residues long: N-acetyl-D-glucosamine kinase (303 aa).

ATP contacts are provided by residues Gly-4–Lys-11 and Gly-133–Leu-140. Zn(2+) is bound by residues His-157, Cys-177, Cys-179, and Cys-184.

This sequence belongs to the ROK (NagC/XylR) family. NagK subfamily.

The enzyme catalyses N-acetyl-D-glucosamine + ATP = N-acetyl-D-glucosamine 6-phosphate + ADP + H(+). Its pathway is cell wall biogenesis; peptidoglycan recycling. In terms of biological role, catalyzes the phosphorylation of N-acetyl-D-glucosamine (GlcNAc) derived from cell-wall degradation, yielding GlcNAc-6-P. This is N-acetyl-D-glucosamine kinase from Salmonella heidelberg (strain SL476).